A 450-amino-acid polypeptide reads, in one-letter code: MSNLPSEPEFEQAYNELASTLENSTLFEKNPEYRTALKVVSIPERVIQFRVVWEDDKNQVQVNRGYRVQFNSALGPYKGGLRFHPTVNLSVLKFLGFEQIFKNALTGLNIGGGKGGADFDPKGKSDNEIRRFCVSFMRELSKHIGADTDVPAGDINVGGREIGFLFGAYKAIQNKWEGVLTGKGGSWGGSLIRPEATGYGLVYYVAHMIQYAGQGSFQGKRVAISGSGNVAQYAALKCIELGATVVSLSDSQGSLIAEGDAYFTPEDVGKIAELKLKRQSLTAFEHGGKYKYIEGSRPWTHVKVDVALPCATQNEVSKEEAESLVASGARYIAEGSNMGCTQEAIDVFEAERKEKKDKAIWYAPGKAANAGGVAVSGLEMAQNSARISWTQEEVDEKLKDIMKNAFETGLETPKKYVEAKDGEYPSLVAGSNIAGFVKVASAMHNHGDWW.

Lys114 is an active-site residue.

It belongs to the Glu/Leu/Phe/Val dehydrogenases family. As to quaternary structure, homohexamer.

It carries out the reaction L-glutamate + NADP(+) + H2O = 2-oxoglutarate + NH4(+) + NADPH + H(+). In Botryotinia fuckeliana (Noble rot fungus), this protein is NADP-specific glutamate dehydrogenase (gdhA).